A 448-amino-acid chain; its full sequence is Probable glycine dehydrogenase (decarboxylating) subunit 1 (448 aa).

It belongs to the GcvP family. N-terminal subunit subfamily. In terms of assembly, the glycine cleavage system is composed of four proteins: P, T, L and H. In this organism, the P 'protein' is a heterodimer of two subunits.

It carries out the reaction N(6)-[(R)-lipoyl]-L-lysyl-[glycine-cleavage complex H protein] + glycine + H(+) = N(6)-[(R)-S(8)-aminomethyldihydrolipoyl]-L-lysyl-[glycine-cleavage complex H protein] + CO2. Its function is as follows. The glycine cleavage system catalyzes the degradation of glycine. The P protein binds the alpha-amino group of glycine through its pyridoxal phosphate cofactor; CO(2) is released and the remaining methylamine moiety is then transferred to the lipoamide cofactor of the H protein. This is Probable glycine dehydrogenase (decarboxylating) subunit 1 from Geobacillus thermodenitrificans (strain NG80-2).